The following is a 345-amino-acid chain: Probable S-adenosylmethionine carrier 2, chloroplastic (345 aa).

The N-terminal 31 residues, 1–31 (MTKALSGFCCSLSLSTLVRSSSSHMDSDIVS), are a transit peptide targeting the chloroplast. Solcar repeat units lie at residues 76–148 (RVLY…TKQK), 157–239 (LSAV…LRIG), and 252–334 (ENAM…TKQI). Helical transmembrane passes span 82 to 102 (LITG…IDTI), 121 to 141 (YSGL…FFGV), 156 to 176 (NLSA…SSIV), 254 to 274 (AMIG…LDVI), and 309 to 329 (GMGP…GVLE).

It belongs to the mitochondrial carrier (TC 2.A.29) family. In terms of tissue distribution, expressed at low levels in seedlings, leaves, flowers, stems and roots.

It localises to the plastid. It is found in the chloroplast membrane. Functionally, probable S-adenosylmethionine (SAM) transporter able to catalyze both uniport and exchange reactions through membranes. This Arabidopsis thaliana (Mouse-ear cress) protein is Probable S-adenosylmethionine carrier 2, chloroplastic (SAMC2).